Reading from the N-terminus, the 1639-residue chain is Mediator of RNA polymerase II transcription subunit 14 (1639 aa).

The LXXLL motif 1 signature appears at 49 to 53 (LAELL). Disordered regions lie at residues 561–586 (GQSPDVLSGQPPQPSAAGGPAPGSDS) and 709–755 (LPQP…KTVH). Positions 575–586 (SAAGGPAPGSDS) are enriched in low complexity. Residues 711 to 721 (QPKPPQAPPTP) are compositionally biased toward pro residues. A compositionally biased stretch (low complexity) spans 722–748 (QQQQQQQQQQQQPGTSDAKSSGAGASA). Residues 768 to 772 (LKRLL) carry the LXXLL motif 2 motif. 2 disordered regions span residues 1039-1243 (RRSQ…HHYT) and 1558-1639 (MQPG…GGPN). Gly residues-rich tracts occupy residues 1062–1088 (GNNGGGGGGGGGAGGGANTFLSGGTGM) and 1122–1142 (IGGGGGAGGAGGQGGQGGQGG). The segment covering 1189–1201 (GPSSLSYMQSHTD) has biased composition (polar residues). Residues 1219-1229 (PGMPRPSPRPG) are compositionally biased toward pro residues. Positions 1558-1579 (MQPGGGPGVPGGPGGPMGGQIG) are enriched in gly residues. A compositionally biased stretch (low complexity) spans 1589–1603 (VGSSPSPMMHSPMQQ). A compositionally biased stretch (gly residues) spans 1604 to 1639 (MGGGGPQPGAYGGMVGGPGGGPQSGGPVGGGPGGPN).

The protein belongs to the Mediator complex subunit 14 family. As to quaternary structure, component of the Mediator complex.

It localises to the nucleus. Component of the Mediator complex, a coactivator involved in the regulated transcription of nearly all RNA polymerase II-dependent genes. Mediator functions as a bridge to convey information from gene-specific regulatory proteins to the basal RNA polymerase II transcription machinery. Mediator is recruited to promoters by direct interactions with regulatory proteins and serves as a scaffold for the assembly of a functional preinitiation complex with RNA polymerase II and the general transcription factors. This Anopheles gambiae (African malaria mosquito) protein is Mediator of RNA polymerase II transcription subunit 14 (MED14).